Reading from the N-terminus, the 116-residue chain is Selenoprotein H (116 aa).

Lysine 20 carries the N6-acetyllysine modification. Positions 35–38 (CTSU) form a cross-link, cysteinyl-selenocysteine (Cys-Sec); redox-active. Residue selenocysteine 38 is a non-standard amino acid, selenocysteine.

The protein belongs to the SelWTH family.

Its function is as follows. May be involved in a redox-related process. In Mus musculus (Mouse), this protein is Selenoprotein H.